A 176-amino-acid polypeptide reads, in one-letter code: Heme oxygenase HutZ (176 aa).

Heme is bound at residue H170.

It belongs to the heme oxygenase HugZ/HutZ family. As to quaternary structure, homodimer. Interacts with HutX, leading to the transfer of the heme from HutX to apo-HutZ.

The enzyme catalyses heme b + 3 AH2 + 3 O2 + 2 H(+) = biliverdin IXbeta + CO + Fe(2+) + 3 A + 3 H2O. The catalysed reaction is heme b + 3 AH2 + 3 O2 + 3 H(+) = biliverdin IXdelta + CO + Fe(2+) + 3 A + 3 H2O. With respect to regulation, activity is pH-dependent. A proximal hydrogen bond between Asp-132 and the heme axial ligant His-170 is essential for heme degradation activity. Heme-degradation reaction is inhibited by iron chelators. In terms of biological role, involved in heme degradation. Catalyzes the degradation of heme to biliverdin, with the release of iron. Forms biliverdin beta and delta. Binds heme with high efficiency. This chain is Heme oxygenase HutZ, found in Vibrio cholerae serotype O1 (strain ATCC 39315 / El Tor Inaba N16961).